The sequence spans 393 residues: Chorismate synthase (393 aa).

NADP(+)-binding residues include arginine 40 and arginine 46. FMN contacts are provided by residues 129–131 (RSS), 249–250 (QA), glycine 301, 316–320 (KPIPT), and arginine 342.

The protein belongs to the chorismate synthase family. As to quaternary structure, homotetramer. It depends on FMNH2 as a cofactor.

The enzyme catalyses 5-O-(1-carboxyvinyl)-3-phosphoshikimate = chorismate + phosphate. It functions in the pathway metabolic intermediate biosynthesis; chorismate biosynthesis; chorismate from D-erythrose 4-phosphate and phosphoenolpyruvate: step 7/7. Functionally, catalyzes the anti-1,4-elimination of the C-3 phosphate and the C-6 proR hydrogen from 5-enolpyruvylshikimate-3-phosphate (EPSP) to yield chorismate, which is the branch point compound that serves as the starting substrate for the three terminal pathways of aromatic amino acid biosynthesis. This reaction introduces a second double bond into the aromatic ring system. In Geobacter sulfurreducens (strain ATCC 51573 / DSM 12127 / PCA), this protein is Chorismate synthase.